We begin with the raw amino-acid sequence, 195 residues long: MVFPSPLQGVDIRHNKDRKVRRKEPKSQDIYLRLLVKLYRFLARRTNSTFNQVVLKRLFMSRTNRPPLSLSRMIRKMKLPGREGKTAVVVGTITDDVRVQEVPKLKVCALRVSSRARSRILKAGGKILTFDQLALDSPKGCGTVLLSGPRKGREVYRHFGKAPGTPHSHTKPYVRSKGRKFERARGRRASRGYKN.

Residue Lys126 forms a Glycyl lysine isopeptide (Lys-Gly) (interchain with G-Cter in SUMO2) linkage. Phosphoserine is present on Ser137. The segment at 158 to 195 (HFGKAPGTPHSHTKPYVRSKGRKFERARGRRASRGYKN) is disordered. Thr165 is subject to Phosphothreonine. Composition is skewed to basic residues over residues 168–178 (SHTKPYVRSKG) and 185–195 (RGRRASRGYKN). Lys171 participates in a covalent cross-link: Glycyl lysine isopeptide (Lys-Gly) (interchain with G-Cter in SUMO2).

This sequence belongs to the eukaryotic ribosomal protein eL18 family. Component of the large ribosomal subunit.

The protein localises to the cytoplasm. The protein resides in the cytosol. It localises to the rough endoplasmic reticulum. Its function is as follows. Component of the large ribosomal subunit. This is Large ribosomal subunit protein eL18 (RPL18) from Sus scrofa (Pig).